The chain runs to 344 residues: Heat-inducible transcription repressor HrcA (344 aa).

Belongs to the HrcA family.

In terms of biological role, negative regulator of class I heat shock genes (grpE-dnaK-dnaJ and groELS operons). Prevents heat-shock induction of these operons. The protein is Heat-inducible transcription repressor HrcA of Streptococcus pneumoniae serotype 19F (strain G54).